Here is a 503-residue protein sequence, read N- to C-terminus: WAS/WASL-interacting protein family member 1 (503 aa).

Positions methionine 1–threonine 14 are enriched in pro residues. Residues methionine 1–arginine 503 are disordered. A compositionally biased stretch (polar residues) spans glutamate 21–alanine 31. In terms of domain architecture, WH2 spans glycine 32–threonine 49. Residue arginine 33 is modified to Asymmetric dimethylarginine. The binds actin stretch occupies residues lysine 45–lysine 48. A compositionally biased stretch (gly residues) spans alanine 65–phenylalanine 104. The span at serine 121–serine 137 shows a compositional bias: low complexity. Omega-N-methylarginine occurs at positions 125 and 134. Pro residues-rich tracts occupy residues phenylalanine 141–serine 154, proline 161–proline 174, serine 182–proline 191, and proline 204–proline 223. Residue serine 142 is modified to Phosphoserine. Serine 234 is subject to Phosphoserine. Residues serine 238 to serine 247 are compositionally biased toward low complexity. 2 stretches are compositionally biased toward pro residues: residues valine 282–proline 298 and alanine 306–proline 323. Residue serine 340 is modified to Phosphoserine. Threonine 345 is subject to Phosphothreonine. The span at proline 346–aspartate 371 shows a compositional bias: pro residues. Serine 350 is subject to Phosphoserine. XRSGPXPPXP motif repeat units follow at residues glycine 352–proline 361, glycine 374–proline 383, and proline 410–proline 419. Residues glycine 413–serine 434 show a composition bias toward pro residues. The span at alanine 480 to glycine 494 shows a compositional bias: basic and acidic residues.

Belongs to the verprolin family. In terms of assembly, binds to WAS, profilin and actin. Binds to WASL. Interacts with DBNL. Interacts with FNBP1L (via the SH3 domain). Highly expressed in peripheral blood mononuclear cells, spleen, placenta, small intestine, colon and thymus. Lower expression in ovary, heart, brain, lung, liver, skeletal muscle, kidney, pancreas, prostate and testis.

The protein localises to the cytoplasmic vesicle. The protein resides in the cytoplasm. It localises to the cytoskeleton. It is found in the cell projection. Its subcellular location is the ruffle. In terms of biological role, plays a role in the reorganization of the actin cytoskeleton. Contributes with NCK1 and GRB2 in the recruitment and activation of WASL. May participate in regulating the subcellular localization of WASL, resulting in the disassembly of stress fibers in favor of filopodia formation. Plays a role in the formation of cell ruffles. Plays an important role in the intracellular motility of vaccinia virus by functioning as an adapter for recruiting WASL to vaccinia virus. This chain is WAS/WASL-interacting protein family member 1 (WIPF1), found in Homo sapiens (Human).